The sequence spans 88 residues: Small ribosomal subunit protein uS15 (88 aa).

The protein belongs to the universal ribosomal protein uS15 family. Part of the 30S ribosomal subunit. Forms a bridge to the 50S subunit in the 70S ribosome, contacting the 23S rRNA.

Its function is as follows. One of the primary rRNA binding proteins, it binds directly to 16S rRNA where it helps nucleate assembly of the platform of the 30S subunit by binding and bridging several RNA helices of the 16S rRNA. In terms of biological role, forms an intersubunit bridge (bridge B4) with the 23S rRNA of the 50S subunit in the ribosome. The polypeptide is Small ribosomal subunit protein uS15 (Mesomycoplasma hyopneumoniae (strain 232) (Mycoplasma hyopneumoniae)).